Reading from the N-terminus, the 262-residue chain is Ribosomal RNA small subunit methyltransferase A (262 aa).

S-adenosyl-L-methionine contacts are provided by histidine 16, leucine 18, glycine 43, glutamate 64, aspartate 89, and asparagine 109.

Belongs to the class I-like SAM-binding methyltransferase superfamily. rRNA adenine N(6)-methyltransferase family. RsmA subfamily.

The protein resides in the cytoplasm. The enzyme catalyses adenosine(1518)/adenosine(1519) in 16S rRNA + 4 S-adenosyl-L-methionine = N(6)-dimethyladenosine(1518)/N(6)-dimethyladenosine(1519) in 16S rRNA + 4 S-adenosyl-L-homocysteine + 4 H(+). Specifically dimethylates two adjacent adenosines (A1518 and A1519) in the loop of a conserved hairpin near the 3'-end of 16S rRNA in the 30S particle. May play a critical role in biogenesis of 30S subunits. This chain is Ribosomal RNA small subunit methyltransferase A, found in Xanthomonas euvesicatoria pv. vesicatoria (strain 85-10) (Xanthomonas campestris pv. vesicatoria).